A 144-amino-acid polypeptide reads, in one-letter code: Large ribosomal subunit protein uL14 (144 aa).

It belongs to the universal ribosomal protein uL14 family. As to quaternary structure, part of the 50S ribosomal subunit. Forms a cluster with proteins L3 and L24e, part of which may contact the 16S rRNA in 2 intersubunit bridges.

Binds to 23S rRNA. Forms part of two intersubunit bridges in the 70S ribosome. This is Large ribosomal subunit protein uL14 from Pyrobaculum islandicum (strain DSM 4184 / JCM 9189 / GEO3).